The chain runs to 154 residues: Crossover junction endodeoxyribonuclease RuvC (154 aa).

Catalysis depends on residues aspartate 7, glutamate 67, and aspartate 139. Mg(2+)-binding residues include aspartate 7, glutamate 67, and aspartate 139.

The protein belongs to the RuvC family. Homodimer which binds Holliday junction (HJ) DNA. The HJ becomes 2-fold symmetrical on binding to RuvC with unstacked arms; it has a different conformation from HJ DNA in complex with RuvA. In the full resolvosome a probable DNA-RuvA(4)-RuvB(12)-RuvC(2) complex forms which resolves the HJ. It depends on Mg(2+) as a cofactor.

The protein localises to the cytoplasm. The enzyme catalyses Endonucleolytic cleavage at a junction such as a reciprocal single-stranded crossover between two homologous DNA duplexes (Holliday junction).. Its function is as follows. The RuvA-RuvB-RuvC complex processes Holliday junction (HJ) DNA during genetic recombination and DNA repair. Endonuclease that resolves HJ intermediates. Cleaves cruciform DNA by making single-stranded nicks across the HJ at symmetrical positions within the homologous arms, yielding a 5'-phosphate and a 3'-hydroxyl group; requires a central core of homology in the junction. The consensus cleavage sequence is 5'-(A/T)TT(C/G)-3'. Cleavage occurs on the 3'-side of the TT dinucleotide at the point of strand exchange. HJ branch migration catalyzed by RuvA-RuvB allows RuvC to scan DNA until it finds its consensus sequence, where it cleaves and resolves the cruciform DNA. The sequence is that of Crossover junction endodeoxyribonuclease RuvC from Prochlorococcus marinus (strain NATL2A).